Reading from the N-terminus, the 415-residue chain is Elongation factor 1-gamma 1 (415 aa).

N-acetylserine is present on Ser-2. The GST N-terminal domain occupies 2-78 (SQGTLYANFR…YLVKLSQDDK (77 aa)). Thr-32 is modified (phosphothreonine). A GST C-terminal domain is found at 89 to 215 (DLNAQAQIIR…KDFKFADKPL (127 aa)). Residues 212 to 256 (DKPLSPPQKKKEKKAPAAAPAASKKKEEAKPAATETETSSKKPKH) are disordered. The EF-1-gamma C-terminal domain occupies 254–415 (PKHPLELLGK…KEIVDGKVLK (162 aa)).

The eukaryotic elongation factor 1 complex (eEF1) is probably a heterohexamer. Two trimeric complexes, each composed of eEF1A (TEF1 or TEF2), eEF1Balpha (EFB1) and eEF1Bgamma (CAM1 or TEF4), are probably dimerized via the eF1Bgamma subunits. The eEF1B subcomplex with the GEF activity is formed of eEF1Balpha and eEF1Bgamma. CAM1 interacts with EFB1. Component of a complex bound to MXR1 promoter region.

It localises to the cytoplasm. The protein localises to the nucleus. It participates in protein biosynthesis; polypeptide chain elongation. Functionally, subunit of the eukaryotic elongation factor 1 complex (eEF1). Probably plays a role in anchoring the complex to other cellular components. May be involved in transcriptional regulation of MXR1. This is Elongation factor 1-gamma 1 (CAM1) from Saccharomyces cerevisiae (strain ATCC 204508 / S288c) (Baker's yeast).